The primary structure comprises 289 residues: Bidirectional sugar transporter SWEET11 (289 aa).

Residues 1 to 9 are Extracellular-facing; the sequence is MSLFNTENT. The chain crosses the membrane as a helical span at residues 10–30; the sequence is WAFVFGLLGNLISFAVFLSPV. Residues 12-98 enclose the MtN3/slv 1 domain; it reads FVFGLLGNLI…SMFLAYAPKP (87 aa). At 31–43 the chain is on the cytoplasmic side; sequence PTFYRIWKKKTTE. A helical membrane pass occupies residues 44–64; it reads GFQSIPYVVALFSATLWLYYA. The Extracellular portion of the chain corresponds to 65 to 70; the sequence is TQKKDV. The helical transmembrane segment at 71–91 threads the bilayer; that stretch reads FLLVTINAFGCFIETIYISMF. Over 92 to 105 the chain is Cytoplasmic; the sequence is LAYAPKPARMLTVK. The helical transmembrane segment at 106–126 threads the bilayer; it reads MLLLMNFGGFCAILLLCQFLV. Over 127 to 133 the chain is Extracellular; it reads KGATRAK. The chain crosses the membrane as a helical span at residues 134–154; that stretch reads IIGGICVGFSVCVFAAPLSII. The MtN3/slv 2 domain occupies 134 to 218; that stretch reads IIGGICVGFS…ILYVVYKYCK (85 aa). Topologically, residues 155–167 are cytoplasmic; the sequence is RTVIKTRSVEYMP. The helical transmembrane segment at 168–188 threads the bilayer; the sequence is FSLSLTLTISAVIWLLYGLAL. The Extracellular portion of the chain corresponds to 189-192; sequence KDIY. Residues 193–213 traverse the membrane as a helical segment; the sequence is VAFPNVLGFALGALQMILYVV. Topologically, residues 214 to 289 are cytoplasmic; the sequence is YKYCKTSPHL…GKQSSSAAAT (76 aa). Positions 266–289 are disordered; it reads DRRAEIEDGQTPKHGKQSSSAAAT. Residue T276 is modified to Phosphothreonine.

This sequence belongs to the SWEET sugar transporter family. As to quaternary structure, forms homooligomers and heterooligomers with SWEET1, SWEET3, SWEET5, SWEET6, SWEET7, SWEET8, SWEET9, SWEET12, SWEET13, SWEET15 and SWEET17. As to expression, expressed in leaves, especially in phloem. Expressed in developing seeds.

It localises to the cell membrane. Its function is as follows. Mediates both low-affinity uptake and efflux of sugar across the plasma membrane. Involved in phloem loading by mediating export from parenchyma cells feeding H(+)-coupled import into the sieve element/companion cell complex, thus contributing to the sucrose migration from sites of synthesis in the mesophyll to the phloem. Contributes to seed filling by triggering sucrose efflux involved in the transfer of sugars from seed coat to embryos. The sequence is that of Bidirectional sugar transporter SWEET11 from Arabidopsis thaliana (Mouse-ear cress).